We begin with the raw amino-acid sequence, 268 residues long: MSRFETQFATLNAKNEGAFVPFVTLCDPTFDRSFEIICTLVDNGADALELGFPFSDPLLDGPVIQAANNRALTAGHSSEDSFKLLEKVRSKYPEIPISLLLCANLIFAKGLDAFYQRCAEVGVDAVLVADIPLLAKEDYVQAAKKHGIQPVFICPPNADEKTIQGVAENSEGYTYLVSRAGVTSAENQAHAANLDTLVEQLKAHNAPPILQGFGIAQPEQVKEALSLGTAGAISGSATVKIIERNLDNHEQCLAELAEFVQTMKAATK.

Catalysis depends on proton acceptor residues Glu-49 and Asp-60.

It belongs to the TrpA family. As to quaternary structure, tetramer of two alpha and two beta chains.

The enzyme catalyses (1S,2R)-1-C-(indol-3-yl)glycerol 3-phosphate + L-serine = D-glyceraldehyde 3-phosphate + L-tryptophan + H2O. It participates in amino-acid biosynthesis; L-tryptophan biosynthesis; L-tryptophan from chorismate: step 5/5. The alpha subunit is responsible for the aldol cleavage of indoleglycerol phosphate to indole and glyceraldehyde 3-phosphate. In Haemophilus influenzae (strain PittGG), this protein is Tryptophan synthase alpha chain.